A 179-amino-acid chain; its full sequence is Large ribosomal subunit protein uL5 (179 aa).

This sequence belongs to the universal ribosomal protein uL5 family. In terms of assembly, part of the 50S ribosomal subunit; part of the 5S rRNA/L5/L18/L25 subcomplex. Contacts the 5S rRNA and the P site tRNA. Forms a bridge to the 30S subunit in the 70S ribosome.

Its function is as follows. This is one of the proteins that bind and probably mediate the attachment of the 5S RNA into the large ribosomal subunit, where it forms part of the central protuberance. In the 70S ribosome it contacts protein S13 of the 30S subunit (bridge B1b), connecting the 2 subunits; this bridge is implicated in subunit movement. Contacts the P site tRNA; the 5S rRNA and some of its associated proteins might help stabilize positioning of ribosome-bound tRNAs. In Proteus mirabilis (strain HI4320), this protein is Large ribosomal subunit protein uL5.